The primary structure comprises 186 residues: Peptidyl-tRNA hydrolase (186 aa).

Tyrosine 14 lines the tRNA pocket. The Proton acceptor role is filled by histidine 19. Residues phenylalanine 64, asparagine 66, and asparagine 112 each coordinate tRNA.

Belongs to the PTH family. In terms of assembly, monomer.

The protein localises to the cytoplasm. It catalyses the reaction an N-acyl-L-alpha-aminoacyl-tRNA + H2O = an N-acyl-L-amino acid + a tRNA + H(+). Functionally, hydrolyzes ribosome-free peptidyl-tRNAs (with 1 or more amino acids incorporated), which drop off the ribosome during protein synthesis, or as a result of ribosome stalling. Catalyzes the release of premature peptidyl moieties from peptidyl-tRNA molecules trapped in stalled 50S ribosomal subunits, and thus maintains levels of free tRNAs and 50S ribosomes. The chain is Peptidyl-tRNA hydrolase from Mycoplasma mycoides subsp. mycoides SC (strain CCUG 32753 / NCTC 10114 / PG1).